Here is a 439-residue protein sequence, read N- to C-terminus: tRNA-2-methylthio-N(6)-dimethylallyladenosine synthase (439 aa).

In terms of domain architecture, MTTase N-terminal spans 2-119 (KYIYIKTWGC…LAQMIDKVEK (118 aa)). [4Fe-4S] cluster-binding residues include C11, C48, C82, C156, C160, and C163. In terms of domain architecture, Radical SAM core spans 142 to 374 (KKTGYTASIS…QNCINKQTMS (233 aa)). The TRAM domain occupies 377-439 (RKMLKSTQSV…HTHSLQGELI (63 aa)).

This sequence belongs to the methylthiotransferase family. MiaB subfamily. Monomer. [4Fe-4S] cluster serves as cofactor.

The protein resides in the cytoplasm. It catalyses the reaction N(6)-dimethylallyladenosine(37) in tRNA + (sulfur carrier)-SH + AH2 + 2 S-adenosyl-L-methionine = 2-methylsulfanyl-N(6)-dimethylallyladenosine(37) in tRNA + (sulfur carrier)-H + 5'-deoxyadenosine + L-methionine + A + S-adenosyl-L-homocysteine + 2 H(+). In terms of biological role, catalyzes the methylthiolation of N6-(dimethylallyl)adenosine (i(6)A), leading to the formation of 2-methylthio-N6-(dimethylallyl)adenosine (ms(2)i(6)A) at position 37 in tRNAs that read codons beginning with uridine. This Buchnera aphidicola subsp. Schizaphis graminum (strain Sg) protein is tRNA-2-methylthio-N(6)-dimethylallyladenosine synthase.